A 426-amino-acid chain; its full sequence is Protein sum2 (426 aa).

Residues 1–80 (MTEFIGSRIS…VKDLRIEEPA (80 aa)) enclose the Sm domain. 3 disordered regions span residues 79–100 (PATT…IGSN), 204–305 (GMPS…AKPR), and 348–426 (SCES…ANDQ). Positions 84 to 93 (SAPPVQPPND) are enriched in pro residues. Residues 226-237 (VSASPSLQSMPP) show a composition bias toward polar residues. Residues 261 to 278 (RNSTVTNDRVVNTTVDVS) are compositionally biased toward low complexity. The span at 279-298 (QSQTVETSGPSKEVPTTQPD) shows a compositional bias: polar residues. Residues 296–332 (QPDASAAKPRTEFDFQTANQKFQSMKDDLLKGKNDEE) form the DFDF domain. The FFD box signature appears at 335–351 (EFYKPKQSFFDNISCES). The span at 350-371 (ESKEKGMEAADRRALRDRERSL) shows a compositional bias: basic and acidic residues. The TFG box motif lies at 360–380 (DRRALRDRERSLNMETFGVAG). Positions 384-401 (RGRRGRGRGRGGRGRGRG) are enriched in basic residues. A compositionally biased stretch (polar residues) spans 405–426 (NQYNQYRNSNGSQPRAQPANDQ).

Functionally, required for G2/M phase checkpoint control. This Schizosaccharomyces pombe (strain 972 / ATCC 24843) (Fission yeast) protein is Protein sum2 (sum2).